The chain runs to 480 residues: Gasdermin-C2 (480 aa).

The interval 1–226 is triggers pyroptosis; that stretch reads MGYSFDRASK…TCVILPSATK (226 aa).

This sequence belongs to the gasdermin family. As to quaternary structure, homooligomer; homooligomeric ring-shaped pore complex containing 27-28 subunits when inserted in the membrane. Cleavage by CASP8 relieves autoinhibition by releasing the N-terminal moiety (Gasdermin-C2, N-terminal) that initiates pyroptosis. In terms of processing, palmitoylated.

The protein resides in the cytoplasm. It localises to the cytosol. It is found in the cell membrane. The full-length protein before cleavage is inactive: intramolecular interactions between N- and C-terminal domains mediate autoinhibition in the absence of activation signal. The intrinsic pyroptosis-inducing activity is carried by the released N-terminal moiety (Gasdermin-C2, N-terminal) following cleavage by caspase CASP8 in response to type-2 immunity following worm infection. This form constitutes the precursor of the pore-forming protein: upon cleavage, the released N-terminal moiety (Gasdermin-C2, N-terminal) binds to membranes and forms pores, triggering pyroptosis. Functionally, pore-forming protein that causes membrane permeabilization and pyroptosis in response to type-2 immunity. Produced by the cleavage of gasdermin-C2 in response to type-2 immunity following worm infection. After cleavage, moves to the plasma membrane where it strongly binds to membrane inner leaflet lipids. Homooligomerizes within the membrane and forms pores of 10-15 nanometers (nm) of inner diameter, triggering pyroptosis and lytic cell death in enterocytes. This chain is Gasdermin-C2, found in Mus musculus (Mouse).